A 148-amino-acid chain; its full sequence is MKINDLKPAPGSKKKAKRIGRGLGSGHGRYATKGLKGQKSRSGGAKGAGFEGGQMPLQRRVPKRGFSNAPFKKEYAIVNLEDLNKIIDEVDIITPETLLQKGIVKDLKDGLKILGNGEIKKSITVKTNAISKSALQKIQSVGGKVEVI.

Residues 1-61 (MKINDLKPAP…GGQMPLQRRV (61 aa)) are disordered.

Belongs to the universal ribosomal protein uL15 family. As to quaternary structure, part of the 50S ribosomal subunit.

In terms of biological role, binds to the 23S rRNA. The sequence is that of Large ribosomal subunit protein uL15 from Thermodesulfovibrio yellowstonii (strain ATCC 51303 / DSM 11347 / YP87).